A 233-amino-acid polypeptide reads, in one-letter code: Antiholin-like protein LrgB (233 aa).

7 consecutive transmembrane segments (helical) span residues 7-27 (INTP…ATFL), 33-53 (GFFL…FLKL), 63-83 (IGGD…AIPL), 97-117 (ILGG…LIAE), 124-144 (GIIA…PVSA), 152-172 (LTSL…SKLI), and 212-232 (ISLV…ATLL).

This sequence belongs to the CidB/LrgB family. LrgB subfamily.

It localises to the cell membrane. Inhibits the expression or activity of extracellular murein hydrolases by interacting, possibly with LrgA, with the holin-like proteins CidA and/or CidB. The LrgAB and CidAB proteins may affect the proton motive force of the membrane. May be involved in programmed cell death (PCD), possibly triggering PCD in response to antibiotics and environmental stresses. The chain is Antiholin-like protein LrgB from Staphylococcus saprophyticus subsp. saprophyticus (strain ATCC 15305 / DSM 20229 / NCIMB 8711 / NCTC 7292 / S-41).